The chain runs to 357 residues: S-adenosylmethionine:tRNA ribosyltransferase-isomerase (357 aa).

It belongs to the QueA family. Monomer.

It localises to the cytoplasm. It carries out the reaction 7-aminomethyl-7-carbaguanosine(34) in tRNA + S-adenosyl-L-methionine = epoxyqueuosine(34) in tRNA + adenine + L-methionine + 2 H(+). Its pathway is tRNA modification; tRNA-queuosine biosynthesis. In terms of biological role, transfers and isomerizes the ribose moiety from AdoMet to the 7-aminomethyl group of 7-deazaguanine (preQ1-tRNA) to give epoxyqueuosine (oQ-tRNA). This is S-adenosylmethionine:tRNA ribosyltransferase-isomerase from Hamiltonella defensa subsp. Acyrthosiphon pisum (strain 5AT).